The sequence spans 368 residues: Agmatine deiminase (368 aa).

Cys357 acts as the Amidino-cysteine intermediate in catalysis.

It belongs to the agmatine deiminase family. As to quaternary structure, homodimer.

The enzyme catalyses agmatine + H2O = N-carbamoylputrescine + NH4(+). Its pathway is amine and polyamine biosynthesis; putrescine biosynthesis via agmatine pathway; N-carbamoylputrescine from agmatine: step 1/1. In terms of biological role, mediates the hydrolysis of agmatine into N-carbamoylputrescine in the arginine decarboxylase (ADC) pathway of putrescine biosynthesis, a basic polyamine. The chain is Agmatine deiminase from Pseudomonas fluorescens (strain ATCC BAA-477 / NRRL B-23932 / Pf-5).